A 189-amino-acid polypeptide reads, in one-letter code: Cancer/testis antigen family 45 member A2 (189 aa).

The protein belongs to the CT45 family. As to expression, testis specific. Expressed in cancer cell lines.

This Homo sapiens (Human) protein is Cancer/testis antigen family 45 member A2.